A 146-amino-acid polypeptide reads, in one-letter code: UPF0178 protein BCG9842_B2187 (146 aa).

This sequence belongs to the UPF0178 family.

The protein is UPF0178 protein BCG9842_B2187 of Bacillus cereus (strain G9842).